We begin with the raw amino-acid sequence, 137 residues long: Large ribosomal subunit protein uL16 (137 aa).

It belongs to the universal ribosomal protein uL16 family. Part of the 50S ribosomal subunit.

In terms of biological role, binds 23S rRNA and is also seen to make contacts with the A and possibly P site tRNAs. The protein is Large ribosomal subunit protein uL16 of Dinoroseobacter shibae (strain DSM 16493 / NCIMB 14021 / DFL 12).